A 427-amino-acid polypeptide reads, in one-letter code: Trigger factor (427 aa).

The region spanning 163–248 (GDTVVIDFEG…VHEVKAKELP (86 aa)) is the PPIase FKBP-type domain.

It belongs to the FKBP-type PPIase family. Tig subfamily.

It is found in the cytoplasm. It carries out the reaction [protein]-peptidylproline (omega=180) = [protein]-peptidylproline (omega=0). Involved in protein export. Acts as a chaperone by maintaining the newly synthesized protein in an open conformation. Functions as a peptidyl-prolyl cis-trans isomerase. The polypeptide is Trigger factor (Enterococcus faecalis (strain ATCC 700802 / V583)).